Consider the following 518-residue polypeptide: Suppressor of hairless homolog (518 aa).

The segment at 22 to 59 (ETDQQRSHVKERVNGTPNQNGGTSTSSKPRSVFENRPP) is disordered. Residues 24–34 (DQQRSHVKERV) are compositionally biased toward basic and acidic residues. Residues 36–50 (GTPNQNGGTSTSSKP) show a composition bias toward polar residues. DNA-binding regions lie at residues 89 to 96 (KSYGNEKR), 223 to 232 (RLRSQTVSTR), and 296 to 328 (RKVD…ERMY). The IPT/TIG domain maps to 386–476 (PVVHSLQLNG…YPTNLTFTFT (91 aa)).

The protein belongs to the Su(H) family. As to quaternary structure, interacts with activated Notch proteins.

It is found in the nucleus. Functionally, transcriptional regulator that plays a central role in Notch signaling, a signaling pathway involved in cell-cell communication that regulates a broad spectrum of cell-fate determinations. Acts as a transcriptional repressor when it is not associated with Notch proteins. When associated with some Notch protein, it acts as a transcriptional activator that activates transcription of Notch target genes. The chain is Suppressor of hairless homolog (RBP-JK) from Halocynthia roretzi (Sea squirt).